Reading from the N-terminus, the 364-residue chain is Dihydroorotate dehydrogenase (quinone) (364 aa).

FMN contacts are provided by residues 61 to 65 (AGYDK) and Thr85. Lys65 lines the substrate pocket. 110–114 (NRLGF) serves as a coordination point for substrate. Residues Asn139 and Asn170 each coordinate FMN. Asn170 contacts substrate. The active-site Nucleophile is Ser173. Asn175 provides a ligand contact to substrate. Positions 215 and 243 each coordinate FMN. 244-245 (NT) serves as a coordination point for substrate. Residues Gly266, Gly295, and 316 to 317 (YS) each bind FMN.

This sequence belongs to the dihydroorotate dehydrogenase family. Type 2 subfamily. In terms of assembly, monomer. It depends on FMN as a cofactor.

It localises to the cell membrane. The catalysed reaction is (S)-dihydroorotate + a quinone = orotate + a quinol. Its pathway is pyrimidine metabolism; UMP biosynthesis via de novo pathway; orotate from (S)-dihydroorotate (quinone route): step 1/1. In terms of biological role, catalyzes the conversion of dihydroorotate to orotate with quinone as electron acceptor. The chain is Dihydroorotate dehydrogenase (quinone) from Brucella melitensis biotype 2 (strain ATCC 23457).